A 467-amino-acid chain; its full sequence is ATP synthase subunit beta (467 aa).

Residue 150-157 (GGAGVGKT) coordinates ATP.

Belongs to the ATPase alpha/beta chains family. In terms of assembly, F-type ATPases have 2 components, CF(1) - the catalytic core - and CF(0) - the membrane proton channel. CF(1) has five subunits: alpha(3), beta(3), gamma(1), delta(1), epsilon(1). CF(0) has three main subunits: a(1), b(2) and c(9-12). The alpha and beta chains form an alternating ring which encloses part of the gamma chain. CF(1) is attached to CF(0) by a central stalk formed by the gamma and epsilon chains, while a peripheral stalk is formed by the delta and b chains.

The protein localises to the cell inner membrane. It carries out the reaction ATP + H2O + 4 H(+)(in) = ADP + phosphate + 5 H(+)(out). Functionally, produces ATP from ADP in the presence of a proton gradient across the membrane. The catalytic sites are hosted primarily by the beta subunits. In Aliivibrio salmonicida (strain LFI1238) (Vibrio salmonicida (strain LFI1238)), this protein is ATP synthase subunit beta.